The sequence spans 222 residues: Cytidylate kinase (222 aa).

11 to 19 contacts ATP; it reads GPAGAGKST.

This sequence belongs to the cytidylate kinase family. Type 1 subfamily.

It localises to the cytoplasm. It catalyses the reaction CMP + ATP = CDP + ADP. It carries out the reaction dCMP + ATP = dCDP + ADP. This chain is Cytidylate kinase, found in Desulforamulus reducens (strain ATCC BAA-1160 / DSM 100696 / MI-1) (Desulfotomaculum reducens).